Here is a 211-residue protein sequence, read N- to C-terminus: Dual specificity protein phosphatase 26 (211 aa).

Residues 60–207 (NHADEVWPGL…LLALDRRLRQ (148 aa)) form the Tyrosine-protein phosphatase domain. The active-site Phosphocysteine intermediate is the cysteine 152.

Belongs to the protein-tyrosine phosphatase family. Non-receptor class dual specificity subfamily. As to quaternary structure, interacts with HSF4. As to expression, brain and skeletal muscle. In the brain it is expressed ubiquitously except in the hippocampus.

The protein localises to the cytoplasm. It is found in the nucleus. It localises to the golgi apparatus. The enzyme catalyses O-phospho-L-tyrosyl-[protein] + H2O = L-tyrosyl-[protein] + phosphate. The catalysed reaction is O-phospho-L-seryl-[protein] + H2O = L-seryl-[protein] + phosphate. It catalyses the reaction O-phospho-L-threonyl-[protein] + H2O = L-threonyl-[protein] + phosphate. Inactivates MAPK1 and MAPK3 which leads to dephosphorylation of heat shock factor protein 4 and a reduction in its DNA-binding activity. The sequence is that of Dual specificity protein phosphatase 26 (Dusp26) from Mus musculus (Mouse).